A 530-amino-acid polypeptide reads, in one-letter code: Arginine--tRNA ligase (530 aa).

Positions 113–123 match the 'HIGH' region motif; sequence ANPTGPLHIGH.

Belongs to the class-I aminoacyl-tRNA synthetase family. As to quaternary structure, monomer.

Its subcellular location is the cytoplasm. The catalysed reaction is tRNA(Arg) + L-arginine + ATP = L-arginyl-tRNA(Arg) + AMP + diphosphate. The polypeptide is Arginine--tRNA ligase (Campylobacter jejuni subsp. jejuni serotype O:6 (strain 81116 / NCTC 11828)).